We begin with the raw amino-acid sequence, 560 residues long: Digoxin reductase (560 aa).

Positions 1-48 form a signal peptide, tat-type signal; sequence MEYGKCRGIERGMGRRDFLKAATLLGATAAGAGMLAGCAPKSASEAQA.

This sequence belongs to the FAD-dependent oxidoreductase 2 family. In terms of assembly, may form a membrane-associated complex with Cgr1. Requires FAD as cofactor. [4Fe-4S] cluster serves as cofactor. In terms of processing, predicted to be exported by the Tat system. The position of the signal peptide cleavage has not been experimentally proven.

It localises to the cell membrane. It catalyses the reaction digoxin + 2 Fe(II)-[cytochrome c] + 3 H(+) = dihydrodigoxin + 2 Fe(III)-[cytochrome c]. The catalysed reaction is digitoxin + 2 Fe(II)-[cytochrome c] + 3 H(+) = dihydrodigitoxin + 2 Fe(III)-[cytochrome c]. The enzyme catalyses digoxigenin + 2 Fe(II)-[cytochrome c] + 3 H(+) = dihydrodigoxigenin + 2 Fe(III)-[cytochrome c]. It carries out the reaction ouabain + 2 Fe(II)-[cytochrome c] + 3 H(+) = dihydroouabain + 2 Fe(III)-[cytochrome c]. It catalyses the reaction ouabagenin + 2 Fe(II)-[cytochrome c] + 3 H(+) = dihydroouabagenin + 2 Fe(III)-[cytochrome c]. Functionally, involved in the inactivation of the cardiac medication and plant natural product digoxin, thus decreasing drug efficacy and toxicity. Catalyzes the reduction of the alpha,beta-unsaturated butyrolactone ring of digoxin to the inactive metabolite dihydrodigoxin. Likely uses the cytochrome Cgr1 as the physiological electron donor, encoded by the adjacent gene in the locus. Only reduces digoxin and other cardenolide toxins, such as digitoxin, digoxigenin, ouabain and ouabagenin. Therefore is a specialized enzyme present in some gut bacteria E.lenta that protects their human host against ingested plant toxins. The polypeptide is Digoxin reductase (Eggerthella lenta (strain ATCC 25559 / DSM 2243 / CCUG 17323 / JCM 9979 / KCTC 3265 / NCTC 11813 / VPI 0255 / 1899 B) (Eubacterium lentum)).